Reading from the N-terminus, the 248-residue chain is UPF0246 protein FN1762 (248 aa).

This sequence belongs to the UPF0246 family.

The chain is UPF0246 protein FN1762 from Fusobacterium nucleatum subsp. nucleatum (strain ATCC 25586 / DSM 15643 / BCRC 10681 / CIP 101130 / JCM 8532 / KCTC 2640 / LMG 13131 / VPI 4355).